The following is a 359-amino-acid chain: Trans-enoyl reductase FSL5 (359 aa).

Position 47–50 (47–50) interacts with NADP(+); it reads IDGK. 134-141 provides a ligand contact to substrate; the sequence is SGVGTIGL. NADP(+) is bound by residues 169–172, 192–195, Tyr-210, and 257–258; these read STAT, SPHN, and LE. A substrate-binding site is contributed by 277 to 281; the sequence is GPTLL. 346-347 contacts NADP(+); it reads VS.

This sequence belongs to the zinc-containing alcohol dehydrogenase family. In terms of assembly, monomer.

It participates in secondary metabolite biosynthesis. Trans-enoyl reductase; part of the gene cluster that mediates the biosynthesis of fusarielins F, G and H, decaketide compounds with 5 methylations and a decaline core that act as mycoestrogens as they stimulate growth of MCF-7 breast cancer cells. The initial compound in the pathway is produced by the reducing polyketide synthase FSL1. FSL1 lacks an active enoyl reductase (ER) domain and biosynthesis of fusarielins relies on the trans-acting enoyl reductase FSL5, before it is released through hydrolysis catalyzed by the thioesterase FSL2. Fusarielins F, G, and H have a C11=C12 cis double bond and is fully reduced between C10 and C11 and between C12 and C13. FSL3 can be involved in the formation of the C11=C12 cis double bond by moving a hypothetical C10=C11 or C12=C13 trans double bond to form prefusarielin. Prefusarielin is oxygenated at C15 and C16 by the cytochrome P450 monooxygenase FSL4, resulting in fusarielin F, which subsequently is epoxidized into fusarielin G by the same enzyme. The final step in the pathway is a reduction of the carboxylic acid moiety to yield fusarielin H via a still undetermined mechanism. This Gibberella zeae (strain ATCC MYA-4620 / CBS 123657 / FGSC 9075 / NRRL 31084 / PH-1) (Wheat head blight fungus) protein is Trans-enoyl reductase FSL5.